Here is a 293-residue protein sequence, read N- to C-terminus: Sec-independent protein translocase protein TatC (293 aa).

6 helical membrane-spanning segments follow: residues 35-55, 87-107, 123-143, 173-193, 204-224, and 228-248; these read AAIA…QPFI, LLKV…LYQA, LFGF…ISYF, ILKF…LVGI, ILKS…LTAP, and IMMM…AIGI.

The protein belongs to the TatC family. As to quaternary structure, the Tat system comprises two distinct complexes: a TatABC complex, containing multiple copies of TatA, TatB and TatC subunits, and a separate TatA complex, containing only TatA subunits. Substrates initially bind to the TatABC complex, which probably triggers association of the separate TatA complex to form the active translocon.

The protein localises to the cell membrane. Functionally, part of the twin-arginine translocation (Tat) system that transports large folded proteins containing a characteristic twin-arginine motif in their signal peptide across membranes. Together with TatB, TatC is part of a receptor directly interacting with Tat signal peptides. This is Sec-independent protein translocase protein TatC from Rothia mucilaginosa (strain DY-18) (Stomatococcus mucilaginosus).